Reading from the N-terminus, the 448-residue chain is UDP-N-acetylmuramoylalanine--D-glutamate ligase (448 aa).

ATP is bound at residue 112 to 118; the sequence is GSNAKST.

Belongs to the MurCDEF family.

The protein resides in the cytoplasm. The enzyme catalyses UDP-N-acetyl-alpha-D-muramoyl-L-alanine + D-glutamate + ATP = UDP-N-acetyl-alpha-D-muramoyl-L-alanyl-D-glutamate + ADP + phosphate + H(+). It functions in the pathway cell wall biogenesis; peptidoglycan biosynthesis. In terms of biological role, cell wall formation. Catalyzes the addition of glutamate to the nucleotide precursor UDP-N-acetylmuramoyl-L-alanine (UMA). This Acinetobacter baumannii (strain AB307-0294) protein is UDP-N-acetylmuramoylalanine--D-glutamate ligase.